Here is a 509-residue protein sequence, read N- to C-terminus: Bifunctional purine biosynthesis protein PurH (509 aa).

Positions M1 to V144 constitute an MGS-like domain.

The protein belongs to the PurH family.

It catalyses the reaction (6R)-10-formyltetrahydrofolate + 5-amino-1-(5-phospho-beta-D-ribosyl)imidazole-4-carboxamide = 5-formamido-1-(5-phospho-D-ribosyl)imidazole-4-carboxamide + (6S)-5,6,7,8-tetrahydrofolate. The catalysed reaction is IMP + H2O = 5-formamido-1-(5-phospho-D-ribosyl)imidazole-4-carboxamide. Its pathway is purine metabolism; IMP biosynthesis via de novo pathway; 5-formamido-1-(5-phospho-D-ribosyl)imidazole-4-carboxamide from 5-amino-1-(5-phospho-D-ribosyl)imidazole-4-carboxamide (10-formyl THF route): step 1/1. The protein operates within purine metabolism; IMP biosynthesis via de novo pathway; IMP from 5-formamido-1-(5-phospho-D-ribosyl)imidazole-4-carboxamide: step 1/1. This Oenococcus oeni (strain ATCC BAA-331 / PSU-1) protein is Bifunctional purine biosynthesis protein PurH.